The following is a 396-amino-acid chain: Deoxyuridine 5'-triphosphate nucleotidohydrolase (396 aa).

Substrate contacts are provided by residues 280–282 and 380–381; these read RSS and FG.

The protein belongs to the dUTPase family. The cofactor is Mg(2+).

It carries out the reaction dUTP + H2O = dUMP + diphosphate + H(+). Its function is as follows. Involved in nucleotide metabolism: produces dUMP, the immediate precursor of thymidine nucleotides and decreases the intracellular concentration of dUTP to avoid uracil incorporation into viral DNA. This chain is Deoxyuridine 5'-triphosphate nucleotidohydrolase, found in Homo sapiens (Human).